The following is a 333-amino-acid chain: uncharacterized protein (333 aa).

The Fe/B12 periplasmic-binding domain maps to 45–318; sequence NVIVSDSMFI…EYVKIIHPKI (274 aa).

This is an uncharacterized protein from Methanocaldococcus jannaschii (strain ATCC 43067 / DSM 2661 / JAL-1 / JCM 10045 / NBRC 100440) (Methanococcus jannaschii).